We begin with the raw amino-acid sequence, 442 residues long: Ankyrin repeat and MYND domain-containing protein 2 (442 aa).

3 ANK repeats span residues 45-74 (NGMTPLMHAAYKGKLDMCKLLLRHGADVNC), 79-108 (HGYTALMFAALSGNKDITWVMLEAGAETDV), and 159-188 (KLAGPLHKIITTTNLHPVKIVMLINENPLL). The Zn(2+) site is built by Cys320, Cys323, Cys332, Cys335, Cys341, Cys345, His353, and Cys357. Residues 320–357 (CTTCGEKGASKRCSVCKMVIYCDQTCQKTHWFAHKKIC) form an MYND-type zinc finger. The span at 401-421 (TRICQKNDNPKDSEEGEKESL) shows a compositional bias: basic and acidic residues. The interval 401–442 (TRICQKNDNPKDSEEGEKESLQSDAGLEGLQEAAVGPQVSEE) is disordered.

In terms of assembly, interacts with the retinal-specific guanylyl cyclase GC1.

The protein resides in the cell projection. It localises to the cilium. May be involved in the trafficking of signaling proteins to the cilia. This chain is Ankyrin repeat and MYND domain-containing protein 2 (ANKMY2), found in Bos taurus (Bovine).